We begin with the raw amino-acid sequence, 252 residues long: Aspartate/glutamate leucyltransferase (252 aa).

The protein belongs to the R-transferase family. Bpt subfamily.

The protein localises to the cytoplasm. It carries out the reaction N-terminal L-glutamyl-[protein] + L-leucyl-tRNA(Leu) = N-terminal L-leucyl-L-glutamyl-[protein] + tRNA(Leu) + H(+). It catalyses the reaction N-terminal L-aspartyl-[protein] + L-leucyl-tRNA(Leu) = N-terminal L-leucyl-L-aspartyl-[protein] + tRNA(Leu) + H(+). Functions in the N-end rule pathway of protein degradation where it conjugates Leu from its aminoacyl-tRNA to the N-termini of proteins containing an N-terminal aspartate or glutamate. This is Aspartate/glutamate leucyltransferase from Polynucleobacter necessarius subsp. necessarius (strain STIR1).